A 409-amino-acid chain; its full sequence is 2-methylfumaryl-CoA isomerase (409 aa).

Catalysis depends on Asp-165, which acts as the Nucleophile.

It belongs to the CoA-transferase III family. Mesaconyl-CoA isomerase subfamily. Homodimer.

It catalyses the reaction 2-methylfumaryl-CoA = 3-methylfumaryl-CoA. Partially inhibited by hydroxylamine. Involved in the glyoxylate assimilation cycle used to regenerate acetyl-CoA and produce pyruvate as universal precursor for biosynthesis. This reaction involves an intramolecular CoA transferase that catalyzes the reversible transfer of the CoA moiety from the C1-carboxyl group of mesaconyl-CoA to the C4-carboxyl group. It does not require free mesaconate as CoA acceptor. The chain is 2-methylfumaryl-CoA isomerase (mct) from Chloroflexus aurantiacus (strain ATCC 29366 / DSM 635 / J-10-fl).